A 248-amino-acid polypeptide reads, in one-letter code: ATP synthase subunit a (248 aa).

A run of 6 helical transmembrane segments spans residues 34–54 (TNATLWMALAALAITALLVFG), 91–111 (YFPYVMTLFCFILFANFLGLL), 121–141 (IAVTAVLAVLVFAGVTVLGFV), 147–167 (FLGLFWVSSAPLALRPVLAVI), 196–216 (VFAAFAAVAAIAPVSVVAITA), and 220–240 (LEVLVCLIQAYVFTILTCVYL).

This sequence belongs to the ATPase A chain family. In terms of assembly, F-type ATPases have 2 components, CF(1) - the catalytic core - and CF(0) - the membrane proton channel. CF(1) has five subunits: alpha(3), beta(3), gamma(1), delta(1), epsilon(1). CF(0) has three main subunits: a(1), b(2) and c(9-12). The alpha and beta chains form an alternating ring which encloses part of the gamma chain. CF(1) is attached to CF(0) by a central stalk formed by the gamma and epsilon chains, while a peripheral stalk is formed by the delta and b chains.

It is found in the cell inner membrane. Its function is as follows. Key component of the proton channel; it plays a direct role in the translocation of protons across the membrane. The sequence is that of ATP synthase subunit a from Paracoccus denitrificans (strain Pd 1222).